Reading from the N-terminus, the 372-residue chain is Envelope phospholipase OPG057 (372 aa).

Residues 153 to 156 carry the YPPL motif; that stretch reads YPPL. 2 S-palmitoyl cysteine; by host lipidation sites follow: cysteine 185 and cysteine 186. Residues 307-334 enclose the PLD phosphodiesterase domain; sequence FTIQNNTKLLIVDDEYVHITSANFDGTH.

It belongs to the orthopoxvirus OPG057 family. Interacts with protein OPG190/B5. In terms of processing, palmitoylated. Attachment of the palmitate moiety is essential for correct intracellular targeting and protein function.

The protein resides in the virion membrane. It localises to the host Golgi apparatus. Its subcellular location is the host trans-Golgi network. It is found in the host endoplasmic reticulum membrane. It carries out the reaction a 1,2-diacyl-sn-glycero-3-phosphocholine + H2O = a 1,2-diacyl-sn-glycero-3-phosphate + choline + H(+). In terms of biological role, major envelope protein that plays a role in the biogenesis of the viral double membrane and in egress of virus from the host cell. Produces the wrapped form of virus that is required for cell-to-cell spread. Acts as a lipase with broad specificity including phospholipase C, phospholipase A, and triacylglycerol lipase activities. The chain is Envelope phospholipase OPG057 (OPG057) from Vaccinia virus (strain Western Reserve) (VACV).